A 488-amino-acid chain; its full sequence is Facilitated trehalose transporter Tret1-2 homolog (488 aa).

Residues 1-28 (MKILMRADTHVSYSVPAEGTKANFTFSQ) are Cytoplasmic-facing. Residues 29-49 (VLAALSVSLCSLVVGFVSAYT) form a helical membrane-spanning segment. The Extracellular portion of the chain corresponds to 50–72 (SPALVSMTDRTITSFEVTKDAGS). The chain crosses the membrane as a helical span at residues 73–93 (WVGGIMPLAALAGGITGGPLI). The Cytoplasmic portion of the chain corresponds to 94 to 105 (EYLGRRNTILAT). The helical transmembrane segment at 106–126 (AVPFIVSSLLIACAVNVIMIL) threads the bilayer. Residues 127 to 129 (CGR) are Extracellular-facing. Residues 130 to 150 (FLTGFCVGIASLSLPVYLGET) traverse the membrane as a helical segment. The Cytoplasmic portion of the chain corresponds to 151–160 (LQPEVRGTLG). The chain crosses the membrane as a helical span at residues 161–181 (LLPTALGNIGILVCYVAGSFM). Residue Asn182 is glycosylated (N-linked (GlcNAc...) asparagine). Topologically, residues 182–184 (NWS) are extracellular. Residues 185–205 (ILAFLGAALPVPFLILMIIIP) traverse the membrane as a helical segment. The Cytoplasmic portion of the chain corresponds to 206-268 (ETPRWFVNRG…ELFKRINLKP (63 aa)). A helical transmembrane segment spans residues 269 to 289 (LSISLGLMFFQQFSGINAVIF). The Extracellular portion of the chain corresponds to 290–305 (YTVQIFKDAGSTIDSN). A helical transmembrane segment spans residues 306 to 326 (LCTIIVGIVNFFATFMGIILI). The Cytoplasmic portion of the chain corresponds to 327–332 (DRLGRK). Residues 333–353 (ILLYVSDIAMILTLSILGGFF) traverse the membrane as a helical segment. Residues 354-372 (YCKAHGPDVSHLGWLPLSC) are Extracellular-facing. Residues 373-393 (FVIYILGFSLGFGPIPWLMMG) form a helical membrane-spanning segment. The Cytoplasmic portion of the chain corresponds to 394 to 402 (EILPAKIRG). A helical transmembrane segment spans residues 403 to 423 (PAASVVTAFNWFCTFVVTKTF). At 424-433 (QDLTVAMGPH) the chain is on the extracellular side. A helical membrane pass occupies residues 434 to 454 (GAFWLFGVVCIVGLFFVIIYV). Over 455-488 (PETRGKSLEEIERKMMGRVPISAVVNIKPFSFNM) the chain is Cytoplasmic.

Belongs to the major facilitator superfamily. Sugar transporter (TC 2.A.1.1) family. Trehalose transporter subfamily.

It is found in the cell membrane. Fails to transport trehalose. In Drosophila sechellia (Fruit fly), this protein is Facilitated trehalose transporter Tret1-2 homolog.